A 431-amino-acid chain; its full sequence is 5-methylthioadenosine/S-adenosylhomocysteine deaminase (431 aa).

2 residues coordinate Zn(2+): His63 and His65. Positions 92, 144, and 184 each coordinate substrate. His211 serves as a coordination point for Zn(2+). Glu214 and Asp299 together coordinate substrate. Asp299 serves as a coordination point for Zn(2+).

The protein belongs to the metallo-dependent hydrolases superfamily. MTA/SAH deaminase family. Zn(2+) is required as a cofactor.

It carries out the reaction S-adenosyl-L-homocysteine + H2O + H(+) = S-inosyl-L-homocysteine + NH4(+). The catalysed reaction is S-methyl-5'-thioadenosine + H2O + H(+) = S-methyl-5'-thioinosine + NH4(+). In terms of biological role, catalyzes the deamination of 5-methylthioadenosine and S-adenosyl-L-homocysteine into 5-methylthioinosine and S-inosyl-L-homocysteine, respectively. Is also able to deaminate adenosine. The protein is 5-methylthioadenosine/S-adenosylhomocysteine deaminase of Thermoanaerobacter pseudethanolicus (strain ATCC 33223 / 39E) (Clostridium thermohydrosulfuricum).